Here is a 293-residue protein sequence, read N- to C-terminus: Ribosomal RNA small subunit methyltransferase H (293 aa).

S-adenosyl-L-methionine contacts are provided by residues Gly-32–His-34, Asp-51, Phe-78, Asp-99, and Gln-106. Residues Pro-271–Ile-293 form a disordered region.

The protein belongs to the methyltransferase superfamily. RsmH family.

The protein resides in the cytoplasm. It catalyses the reaction cytidine(1402) in 16S rRNA + S-adenosyl-L-methionine = N(4)-methylcytidine(1402) in 16S rRNA + S-adenosyl-L-homocysteine + H(+). In terms of biological role, specifically methylates the N4 position of cytidine in position 1402 (C1402) of 16S rRNA. The chain is Ribosomal RNA small subunit methyltransferase H from Persephonella marina (strain DSM 14350 / EX-H1).